The chain runs to 465 residues: Light-independent protochlorophyllide reductase subunit N (465 aa).

Positions 23, 48, and 108 each coordinate [4Fe-4S] cluster.

The protein belongs to the BchN/ChlN family. Protochlorophyllide reductase is composed of three subunits; ChlL, ChlN and ChlB. Forms a heterotetramer of two ChlB and two ChlN subunits. The cofactor is [4Fe-4S] cluster.

The catalysed reaction is chlorophyllide a + oxidized 2[4Fe-4S]-[ferredoxin] + 2 ADP + 2 phosphate = protochlorophyllide a + reduced 2[4Fe-4S]-[ferredoxin] + 2 ATP + 2 H2O. Its pathway is porphyrin-containing compound metabolism; chlorophyll biosynthesis (light-independent). Its function is as follows. Component of the dark-operative protochlorophyllide reductase (DPOR) that uses Mg-ATP and reduced ferredoxin to reduce ring D of protochlorophyllide (Pchlide) to form chlorophyllide a (Chlide). This reaction is light-independent. The NB-protein (ChlN-ChlB) is the catalytic component of the complex. This Trichodesmium erythraeum (strain IMS101) protein is Light-independent protochlorophyllide reductase subunit N.